We begin with the raw amino-acid sequence, 1256 residues long: Octopamine receptor beta-3R (1256 aa).

The Extracellular portion of the chain corresponds to 1 to 143 (MSGVNVADLL…LDLSLLLLKG (143 aa)). Asn36, Asn113, and Asn117 each carry an N-linked (GlcNAc...) asparagine glycan. Residues 144–164 (FIFSSIILAAVLGNALVIISV) form a helical membrane-spanning segment. The Cytoplasmic segment spans residues 165-171 (QRNRKLR). The chain crosses the membrane as a helical span at residues 172–192 (VITNYFVVSLAMADMLVALCA). At 193 to 213 (MTFNASVELSGGKWMFGPFMC) the chain is on the extracellular side. An N-linked (GlcNAc...) asparagine glycan is attached at Asn196. Residues 214–236 (NVYNSLDVYFSTASILHLCCISV) form a helical membrane-spanning segment. At 237-258 (DRYYAIVRPLEYPLNMTHKTVC) the chain is on the cytoplasmic side. A helical transmembrane segment spans residues 259-279 (FMLANVWILPALISFTPIFLG). The Extracellular segment spans residues 280-305 (WYTTEEHLREISLHPDQCSFVVNKAY). The chain crosses the membrane as a helical span at residues 306 to 326 (ALISSSVSFWIPGIVMLVMYW). Residues 327-1169 (RIFKEAIRQR…WKAEHKAART (843 aa)) are Cytoplasmic-facing. 5 disordered regions span residues 377–427 (AREE…DLRD), 480–512 (ELDK…ESTA), 665–698 (LSHS…NKPD), 751–774 (GESP…EPSG), and 1087–1117 (DTTV…SSTR). The span at 396 to 406 (TDEDDDRDECD) shows a compositional bias: acidic residues. Residues 489-498 (NGPQQQLSLT) show a composition bias toward polar residues. Residues 757-770 (PATPPPSLSPPELP) show a composition bias toward pro residues. The helical transmembrane segment at 1170-1190 (LGIIMGVFLLCWLPFFLWYVI) threads the bilayer. Residues 1191 to 1202 (TSLCGPACPCPD) are Extracellular-facing. The helical transmembrane segment at 1203–1223 (VLVVVLFWIGYFNSTLNPLIY) threads the bilayer. At 1224–1256 (AYFNRDFREAFRNTLECVLPCLEKRNPYNAYYV) the chain is on the cytoplasmic side.

The protein belongs to the G-protein coupled receptor 1 family. As to expression, in the adult, expressed in the inferior and superior protocerebrum, the posterior lateral protocerebrum, the deutocerebrum, the surface of the subesophageal ganglion, the lateral cell body region, the cortical layer of the ventral nerve cord and the optic lobe medulla of the central nervous system (CNS). Also expressed in the nurse cells and follicle cells of the egg chambers in the ovary at oogenic stages 1-10, and spermatogonia and spermatocytes in the testis. Expressed ubiquitously in the embryonic CNS. In larvae, expressed in the ventral cortical layer of the ventral nerve cord, the cortical layer of the brain lobes, salivary glands, midgut, imaginal disks and developing reproductive organs. Expressed in the larval prothoracic gland with weak expression in other regions of the ring gland.

It localises to the cell membrane. Autoreceptor for octopamine, which is a neurotransmitter, neurohormone, and neuromodulator in invertebrates. Probably also acts as a receptor for tyramine during ecdysone biosynthesis. Required for the biosynthesis of the steroid hormone ecdysone which is necessary for metamorphosis. Involved in activation of prothoracicotropic hormone and insulin-like peptide signaling which is required for the expression of ecdysone biosynthetic genes. The polypeptide is Octopamine receptor beta-3R (Drosophila melanogaster (Fruit fly)).